The primary structure comprises 269 residues: MKRYQNLKVGEAFSKNRIYPFACNELSSILNLAYSLSPKNVKALIFQDTLSAFRLLPDINTSAAVSAANLLLKSVEAVLPKQKKNLAIVEFKQAKVALKRRSKNREEEDIDIPSLPQDILIHIFSFLEISSLVSSAQVSRSWNQATHENSLWQSQFDLHFNHKVLIRMQSDIDWREAFKKAYIAANSSEALRSGRGYCSYCDSIVWHENLRCLNKQCRLKSGNKPLDLITTHQVVNYLLGIESSDDESESDDEAFPGRLWKLSYVPDYL.

In terms of domain architecture, F-box spans 109–155 (DIDIPSLPQDILIHIFSFLEISSLVSSAQVSRSWNQATHENSLWQSQ).

This Arabidopsis thaliana (Mouse-ear cress) protein is F-box protein At5g52880.